The chain runs to 329 residues: DNA-directed RNA polymerase subunit alpha (329 aa).

Residues 1-235 are alpha N-terminal domain (alpha-NTD); the sequence is MLGSVTDFLK…EQLDAFVDLR (235 aa). The interval 249-329 is alpha C-terminal domain (alpha-CTD); sequence FDPILLRPVD…NWPPASLADN (81 aa).

This sequence belongs to the RNA polymerase alpha chain family. As to quaternary structure, homodimer. The RNAP catalytic core consists of 2 alpha, 1 beta, 1 beta' and 1 omega subunit. When a sigma factor is associated with the core the holoenzyme is formed, which can initiate transcription.

It carries out the reaction RNA(n) + a ribonucleoside 5'-triphosphate = RNA(n+1) + diphosphate. In terms of biological role, DNA-dependent RNA polymerase catalyzes the transcription of DNA into RNA using the four ribonucleoside triphosphates as substrates. This Tolumonas auensis (strain DSM 9187 / NBRC 110442 / TA 4) protein is DNA-directed RNA polymerase subunit alpha.